A 152-amino-acid polypeptide reads, in one-letter code: Large-conductance mechanosensitive channel (152 aa).

3 consecutive transmembrane segments (helical) span residues 21-41, 44-64, and 92-112; these read IDLAVGVIIGAAFGKIVDSLV, VVMPLVNFILGGSVDFSNKFL, and GNFITIIINFVLLAFVIFWMV.

The protein belongs to the MscL family. Homopentamer.

Its subcellular location is the cell inner membrane. Channel that opens in response to stretch forces in the membrane lipid bilayer. May participate in the regulation of osmotic pressure changes within the cell. This chain is Large-conductance mechanosensitive channel, found in Bordetella bronchiseptica (strain ATCC BAA-588 / NCTC 13252 / RB50) (Alcaligenes bronchisepticus).